Reading from the N-terminus, the 324-residue chain is Zinc transporter ZIP1 (324 aa).

Residues 1–30 (MGPWGEPELLVWRPEAVASEPSVPVGLEVK) are Extracellular-facing. The helical transmembrane segment at 31 to 51 (LGALVLLLLLTLICSLVPVCV) threads the bilayer. At 52–68 (LRRSGANHEASASGQKA) the chain is on the cytoplasmic side. Residues 69–89 (LSLVSCFAGGVFLATCLLDLL) traverse the membrane as a helical segment. The Extracellular portion of the chain corresponds to 90-104 (PDYLAAIDEALEALH). Residues 105 to 125 (VTLQFPLQEFILAMGFFLVLV) form a helical membrane-spanning segment. Residues 126–179 (MEQITLAYKEQTSPPHPEETRALLGTVNGGPQHWHDGPGIPQAGGTPAAPSALR) lie on the Cytoplasmic side of the membrane. A helical transmembrane segment spans residues 180 to 200 (ACVLVFSLALHSVFEGLAVGL). Residues 201–206 (QRDRAR) are Extracellular-facing. Residues 207 to 227 (AMELCLALLLHKGILAVSLSL) traverse the membrane as a helical segment. Over 228 to 237 (RLLQSHLRVQ) the chain is Cytoplasmic. Residues 238–258 (VVAGCGILFSCMTPLGIGLGA) traverse the membrane as a helical segment. Residues 259–272 (ALAESAGPLHQLAQ) lie on the Extracellular side of the membrane. The helical transmembrane segment at 273–293 (SVLEGMAAGTFLYITFLEILP) threads the bilayer. The Cytoplasmic segment spans residues 294–303 (QELATSEQRI). A helical membrane pass occupies residues 304-324 (LKVILLLAGFALLTGLLFVQI).

Belongs to the ZIP transporter (TC 2.A.5) family. Ubiquitous, except in the pancreas. Highest levels seen in kidney, salivary gland and placenta.

It localises to the cell membrane. The protein localises to the endoplasmic reticulum membrane. The enzyme catalyses Zn(2+)(in) = Zn(2+)(out). Its function is as follows. Transporter for the divalent cation Zn(2+). Mediates the influx of Zn(2+) into cells from extracellular space. The chain is Zinc transporter ZIP1 (Slc39a1) from Mus musculus (Mouse).